We begin with the raw amino-acid sequence, 144 residues long: Ribonuclease H (144 aa).

The RNase H type-1 domain maps to 1-136 (MKIVTLFSDG…CDQMARNEAL (136 aa)). Mg(2+) is bound by residues Asp9, Glu47, Asp69, and Asp128.

It belongs to the RNase H family. As to quaternary structure, monomer. Mg(2+) is required as a cofactor.

It localises to the cytoplasm. It carries out the reaction Endonucleolytic cleavage to 5'-phosphomonoester.. Its function is as follows. Endonuclease that specifically degrades the RNA of RNA-DNA hybrids. The protein is Ribonuclease H of Campylobacter concisus (strain 13826).